The following is a 215-amino-acid chain: Beta-crystallin A3-1 (215 aa).

The tract at residues 1–30 (MEIPVDQTEREDITSEKMAQINPLPVHLGP) is N-terminal arm. 2 consecutive Beta/gamma crystallin 'Greek key' domains span residues 31 to 70 (WKIT…KVEC) and 71 to 117 (GAWI…RPIC). The connecting peptide stretch occupies residues 118–123 (SANHIE). 2 Beta/gamma crystallin 'Greek key' domains span residues 124-165 (SKLV…KVQC) and 166-214 (GAWV…RRIQ).

This sequence belongs to the beta/gamma-crystallin family. In terms of assembly, homo/heterodimer, or complexes of higher-order. The structure of beta-crystallin oligomers seems to be stabilized through interactions between the N-terminal arms. In terms of processing, the N-terminus is blocked.

Its function is as follows. Crystallins are the dominant structural components of the vertebrate eye lens. The sequence is that of Beta-crystallin A3-1 from Aquarana catesbeiana (American bullfrog).